Consider the following 102-residue polypeptide: Large ribosomal subunit protein uL24 (102 aa).

Belongs to the universal ribosomal protein uL24 family. Part of the 50S ribosomal subunit.

Functionally, one of two assembly initiator proteins, it binds directly to the 5'-end of the 23S rRNA, where it nucleates assembly of the 50S subunit. One of the proteins that surrounds the polypeptide exit tunnel on the outside of the subunit. The polypeptide is Large ribosomal subunit protein uL24 (Burkholderia ambifaria (strain ATCC BAA-244 / DSM 16087 / CCUG 44356 / LMG 19182 / AMMD) (Burkholderia cepacia (strain AMMD))).